Reading from the N-terminus, the 322-residue chain is Phosphatidylserine decarboxylase proenzyme (322 aa).

Residues Asp90, His147, and Ser254 each act as charge relay system; for autoendoproteolytic cleavage activity in the active site. The active-site Schiff-base intermediate with substrate; via pyruvic acid; for decarboxylase activity is Ser254. Ser254 is subject to Pyruvic acid (Ser); by autocatalysis. The interval 294–322 is disordered; sequence EVEPAPLPADEIKAEHDASPLVDNKKDDT. The segment covering 303–322 has biased composition (basic and acidic residues); it reads DEIKAEHDASPLVDNKKDDT.

The protein belongs to the phosphatidylserine decarboxylase family. PSD-B subfamily. Prokaryotic type I sub-subfamily. In terms of assembly, heterodimer of a large membrane-associated beta subunit and a small pyruvoyl-containing alpha subunit. Pyruvate is required as a cofactor. Is synthesized initially as an inactive proenzyme. Formation of the active enzyme involves a self-maturation process in which the active site pyruvoyl group is generated from an internal serine residue via an autocatalytic post-translational modification. Two non-identical subunits are generated from the proenzyme in this reaction, and the pyruvate is formed at the N-terminus of the alpha chain, which is derived from the carboxyl end of the proenzyme. The autoendoproteolytic cleavage occurs by a canonical serine protease mechanism, in which the side chain hydroxyl group of the serine supplies its oxygen atom to form the C-terminus of the beta chain, while the remainder of the serine residue undergoes an oxidative deamination to produce ammonia and the pyruvoyl prosthetic group on the alpha chain. During this reaction, the Ser that is part of the protease active site of the proenzyme becomes the pyruvoyl prosthetic group, which constitutes an essential element of the active site of the mature decarboxylase.

Its subcellular location is the cell membrane. It catalyses the reaction a 1,2-diacyl-sn-glycero-3-phospho-L-serine + H(+) = a 1,2-diacyl-sn-glycero-3-phosphoethanolamine + CO2. It functions in the pathway phospholipid metabolism; phosphatidylethanolamine biosynthesis; phosphatidylethanolamine from CDP-diacylglycerol: step 2/2. Functionally, catalyzes the formation of phosphatidylethanolamine (PtdEtn) from phosphatidylserine (PtdSer). In Salmonella paratyphi C (strain RKS4594), this protein is Phosphatidylserine decarboxylase proenzyme.